The chain runs to 537 residues: Lysine--tRNA ligase (537 aa).

Positions 30–38 (PSGNIHIGN) match the 'HIGH' region motif. Positions 276–280 (AMSSS) match the 'KMSKS' region motif.

It belongs to the class-I aminoacyl-tRNA synthetase family.

The protein resides in the cytoplasm. It carries out the reaction tRNA(Lys) + L-lysine + ATP = L-lysyl-tRNA(Lys) + AMP + diphosphate. The sequence is that of Lysine--tRNA ligase from Methanosarcina barkeri (strain Fusaro / DSM 804).